We begin with the raw amino-acid sequence, 407 residues long: GTPase Obg (407 aa).

Residues 1–159 form the Obg domain; the sequence is MKFVDEVSIR…RDLKMEMKVL (159 aa). A disordered region spans residues 127–150; it reads NTRFKSSTNRAPRQTTPGKPGDQR. Positions 129 to 143 are enriched in polar residues; it reads RFKSSTNRAPRQTTP. The OBG-type G domain maps to 160–333; the sequence is ADVGLLGLPN…LSHDLMRYLE (174 aa). GTP contacts are provided by residues 166–173, 191–195, 213–216, 283–286, and 314–316; these read GLPNAGKS, FTTLV, DIPG, NKAD, and SAI. Residues Ser-173 and Thr-193 each contribute to the Mg(2+) site. The tract at residues 378–407 is disordered; that stretch reads VKSVHDIGDDDDWDDFEDDEDGPEIIYVRD. A compositionally biased stretch (acidic residues) spans 385-400; that stretch reads GDDDDWDDFEDDEDGP.

It belongs to the TRAFAC class OBG-HflX-like GTPase superfamily. OBG GTPase family. Monomer. Requires Mg(2+) as cofactor.

The protein resides in the cytoplasm. An essential GTPase which binds GTP, GDP and possibly (p)ppGpp with moderate affinity, with high nucleotide exchange rates and a fairly low GTP hydrolysis rate. Plays a role in control of the cell cycle, stress response, ribosome biogenesis and in those bacteria that undergo differentiation, in morphogenesis control. The polypeptide is GTPase Obg (Pseudomonas entomophila (strain L48)).